Consider the following 238-residue polypeptide: Ribosomal RNA small subunit methyltransferase G (238 aa).

S-adenosyl-L-methionine is bound by residues glycine 77, phenylalanine 82, 128–129 (AE), and arginine 147.

This sequence belongs to the methyltransferase superfamily. RNA methyltransferase RsmG family.

The protein localises to the cytoplasm. In terms of biological role, specifically methylates the N7 position of guanine in position 535 of 16S rRNA. The polypeptide is Ribosomal RNA small subunit methyltransferase G (Listeria monocytogenes serotype 4b (strain CLIP80459)).